The chain runs to 122 residues: UPF0382 membrane protein SAUSA300_0565 (122 aa).

4 helical membrane-spanning segments follow: residues 3–23, 46–66, 69–89, and 98–118; these read LFII…AFGA, MYHG…SINV, AGWL…ILVL, and ITPI…IATF.

It belongs to the UPF0382 family.

The protein localises to the cell membrane. The protein is UPF0382 membrane protein SAUSA300_0565 of Staphylococcus aureus (strain USA300).